An 89-amino-acid chain; its full sequence is Sec-independent protein translocase protein TatA (89 aa).

A helical membrane pass occupies residues 1-21 (MGGISIWQLLIIALIVVLLFG). Over residues 47-61 (EEKKALEENATDKPA) the composition is skewed to basic and acidic residues. The disordered stretch occupies residues 47–89 (EEKKALEENATDKPAADTAKVTETAKVAETAEKKAESKGKEQA). The segment covering 62-74 (ADTAKVTETAKVA) has biased composition (low complexity). The segment covering 75–89 (ETAEKKAESKGKEQA) has biased composition (basic and acidic residues).

The protein belongs to the TatA/E family. The Tat system comprises two distinct complexes: a TatABC complex, containing multiple copies of TatA, TatB and TatC subunits, and a separate TatA complex, containing only TatA subunits. Substrates initially bind to the TatABC complex, which probably triggers association of the separate TatA complex to form the active translocon.

It localises to the cell inner membrane. Functionally, part of the twin-arginine translocation (Tat) system that transports large folded proteins containing a characteristic twin-arginine motif in their signal peptide across membranes. TatA could form the protein-conducting channel of the Tat system. This is Sec-independent protein translocase protein TatA from Shewanella pealeana (strain ATCC 700345 / ANG-SQ1).